Consider the following 875-residue polypeptide: Neurotrypsin (875 aa).

Residues 1 to 20 (MTLARFVLALMLGALPEVVG) form the signal peptide. N26 carries an N-linked (GlcNAc...) asparagine glycan. The segment at 29–88 (LHHSHRHSPPAGPHYPYYLPTQQRPPRTRPPPPLPRFPRPPRALPAQRPHALQAGHTPRP) is disordered. Residues 56 to 71 (TRPPPPLPRFPRPPRA) show a composition bias toward pro residues. Positions 93-165 (CPAGEPWVSV…GKVDWGYCDC (73 aa)) constitute a Kringle domain. Disulfide bonds link C93-C165, C109-C149, C138-C163, C195-C259, C208-C269, C239-C249, C305-C369, C318-C379, C349-C359, C412-C475, C425-C485, C455-C465, C525-C589, C538-C599, C569-C579, C619-C750, C661-C677, C765-C831, C794-C808, and C821-C850. 4 SRCR domains span residues 170 to 271 (VRLR…TCSF), 280 to 381 (IRLA…SCTP), 387 to 487 (IRLA…ACYP), and 500 to 601 (VRLM…ICDY). The tract at residues 619 to 630 (CGLRLLHRRQKR) is zymogen activation region. The 244-residue stretch at 631 to 874 (IIGGKNSLRG…FVPWIKSVTK (244 aa)) folds into the Peptidase S1 domain. The active-site Charge relay system is the H676. A glycan (N-linked (GlcNAc...) asparagine) is linked at N683. Catalysis depends on D726, which acts as the Charge relay system. The active-site Charge relay system is S825.

This sequence belongs to the peptidase S1 family. As to expression, brain and Leydig cells of the testis.

Its subcellular location is the secreted. In terms of biological role, plays a role in neuronal plasticity and the proteolytic action may subserve structural reorganizations associated with learning and memory operations. This chain is Neurotrypsin (PRSS12), found in Homo sapiens (Human).